We begin with the raw amino-acid sequence, 110 residues long: Small EDRK-rich factor 1 (110 aa).

The segment covering 1–30 (MARGNQRELARQKNMKKTQEISKGKRKEDS) has biased composition (basic and acidic residues). The segment at 1 to 61 (MARGNQRELA…GPHLPLKAPR (61 aa)) is disordered. Residues 11–17 (RQKNMKK) form a required for SNCA binding region. The segment covering 34 to 50 (SQRKQSSGGQKSESKMS) has biased composition (low complexity).

It belongs to the SERF family. As to quaternary structure, interacts with SNCA; this interaction promotes the aggregation of SNCA. Isoform Long is predominantly expressed in heart, brain and skeletal muscle. Isoform Short and Isoform Long are expressed throughout the central nervous system, including spinal cord.

It localises to the cytoplasm. It is found in the cytosol. The protein resides in the nucleus. Its function is as follows. Positive regulator of amyloid protein aggregation and proteotoxicity. Induces conformational changes in amyloid proteins, such as APP, HTT, and SNCA, driving them into compact formations preceding the formation of aggregates. The polypeptide is Small EDRK-rich factor 1 (SERF1A) (Homo sapiens (Human)).